The sequence spans 283 residues: Bifunctional protein FolD (283 aa).

NADP(+) contacts are provided by residues 166 to 168 (GAS), serine 191, and isoleucine 232.

This sequence belongs to the tetrahydrofolate dehydrogenase/cyclohydrolase family. As to quaternary structure, homodimer.

It catalyses the reaction (6R)-5,10-methylene-5,6,7,8-tetrahydrofolate + NADP(+) = (6R)-5,10-methenyltetrahydrofolate + NADPH. The catalysed reaction is (6R)-5,10-methenyltetrahydrofolate + H2O = (6R)-10-formyltetrahydrofolate + H(+). It functions in the pathway one-carbon metabolism; tetrahydrofolate interconversion. In terms of biological role, catalyzes the oxidation of 5,10-methylenetetrahydrofolate to 5,10-methenyltetrahydrofolate and then the hydrolysis of 5,10-methenyltetrahydrofolate to 10-formyltetrahydrofolate. The polypeptide is Bifunctional protein FolD (Chromobacterium violaceum (strain ATCC 12472 / DSM 30191 / JCM 1249 / CCUG 213 / NBRC 12614 / NCIMB 9131 / NCTC 9757 / MK)).